A 1026-amino-acid polypeptide reads, in one-letter code: Translation initiation factor IF-2, chloroplastic (1026 aa).

A chloroplast-targeting transit peptide spans 1–63 (MPSMLVLVGT…KKWLCRYSVS (63 aa)). A compositionally biased stretch (basic and acidic residues) spans 158 to 173 (AEKLEIPKPGNKEGGE). 3 disordered regions span residues 158–208 (AEKL…TMKS), 230–284 (FNRG…PPVK), and 300–393 (VSEE…KWSK). Residues 178-194 (SQPSANSSNSRNGSYAN) are compositionally biased toward polar residues. Residues 254–269 (LAPPQPPFRPQPPVRP) are compositionally biased toward pro residues. The segment covering 306 to 317 (SSVKSKERKPIL) has biased composition (basic and acidic residues). Positions 384 to 393 (SGRKGRKWSK) are enriched in basic residues. Positions 499–672 (DRPPVITIMG…MLVAELQELK (174 aa)) constitute a tr-type G domain. Positions 508–515 (GHVDHGKT) are G1. 508-515 (GHVDHGKT) contacts GTP. The tract at residues 533–537 (GITQG) is G2. The segment at 558–561 (DTPG) is G3. GTP-binding positions include 558 to 562 (DTPGH) and 612 to 615 (NKID). The tract at residues 612–615 (NKID) is G4. Residues 648-650 (SAL) form a G5 region.

This sequence belongs to the TRAFAC class translation factor GTPase superfamily. Classic translation factor GTPase family. IF-2 subfamily.

Its subcellular location is the plastid. It localises to the chloroplast. Functionally, one of the essential components for the initiation of protein synthesis. Protects formylmethionyl-tRNA from spontaneous hydrolysis and promotes its binding to the 30S ribosomal subunits. Also involved in the hydrolysis of GTP during the formation of the 70S ribosomal complex. This Arabidopsis thaliana (Mouse-ear cress) protein is Translation initiation factor IF-2, chloroplastic.